The sequence spans 92 residues: MEIKILKSESNYLELEIEGEDHTLGNLIAGTLRKISGVSFASYYQPHPLTDKIIVKILTDGSIAPKDALLKAIETVRVMASHYIDEIKGLTK.

The protein belongs to the archaeal Rpo11/eukaryotic RPB11/RPC19 RNA polymerase subunit family. Part of the 13-subunit RNA polymerase complex.

It localises to the cytoplasm. It carries out the reaction RNA(n) + a ribonucleoside 5'-triphosphate = RNA(n+1) + diphosphate. DNA-dependent RNA polymerase (RNAP) catalyzes the transcription of DNA into RNA using the four ribonucleoside triphosphates as substrates. This chain is DNA-directed RNA polymerase subunit Rpo11, found in Saccharolobus shibatae (strain ATCC 51178 / DSM 5389 / JCM 8931 / NBRC 15437 / B12) (Sulfolobus shibatae).